A 334-amino-acid chain; its full sequence is Formamidase (334 aa).

Residues 14-260 (FLVAAIQFPV…WEIVTGEIYP (247 aa)) enclose the CN hydrolase domain. The active-site Proton acceptor is E60. K133 functions as the Proton donor in the catalytic mechanism. The Nucleophile role is filled by C166.

The protein belongs to the carbon-nitrogen hydrolase superfamily. Aliphatic amidase family.

The catalysed reaction is formamide + H2O = formate + NH4(+). In terms of biological role, is an aliphatic amidase with a restricted substrate specificity, as it only hydrolyzes formamide. The polypeptide is Formamidase (Helicobacter pylori (strain HPAG1)).